We begin with the raw amino-acid sequence, 454 residues long: Probable spastin homolog Bm1_53365 (454 aa).

ATP is bound at residue 218–225; it reads GPPGNGKT.

The protein belongs to the AAA ATPase family. Spastin subfamily. Homohexamer. The homohexamer is stabilized by ATP-binding. The homohexamer may adopt a ring conformation through which microtubules pass prior to being severed. Interacts with microtubules.

It is found in the cytoplasm. Its subcellular location is the cytoskeleton. It localises to the perinuclear region. It carries out the reaction n ATP + n H2O + a microtubule = n ADP + n phosphate + (n+1) alpha/beta tubulin heterodimers.. Its function is as follows. Severs microtubules, probably in an ATP-dependent fashion. The sequence is that of Probable spastin homolog Bm1_53365 from Brugia malayi (Filarial nematode worm).